The sequence spans 284 residues: Protoheme IX farnesyltransferase (284 aa).

The next 8 helical transmembrane spans lie at 13–33, 35–55, 87–107, 108–128, 133–153, 162–182, 224–244, and 264–284; these read IIIG…FPFF, VFLF…SCIF, IFAS…VNIL, SMFL…FFLK, YSTF…HTAI, FLLF…IAIL, FLGY…FYWL, and FYYS…DFIF.

It belongs to the UbiA prenyltransferase family. Protoheme IX farnesyltransferase subfamily.

It localises to the cell membrane. It catalyses the reaction heme b + (2E,6E)-farnesyl diphosphate + H2O = Fe(II)-heme o + diphosphate. The protein operates within porphyrin-containing compound metabolism; heme O biosynthesis; heme O from protoheme: step 1/1. Converts heme B (protoheme IX) to heme O by substitution of the vinyl group on carbon 2 of heme B porphyrin ring with a hydroxyethyl farnesyl side group. The protein is Protoheme IX farnesyltransferase of Buchnera aphidicola subsp. Schizaphis graminum (strain Sg).